The following is a 533-amino-acid chain: DNA-directed RNA polymerase III subunit RPC3 (533 aa).

Residues 161–183 are disordered; sequence PLVPDTDSSDPGPPPPAPNLVIN. Serine 194 is subject to Phosphoserine. Positions 197–228 are disordered; sequence GKGKRRRSSDEDAAGEPKAKKPRCTDNEEPTP. Positions 211-222 are enriched in basic and acidic residues; sequence GEPKAKKPRCTD.

Belongs to the eukaryotic RPC3/POLR3C RNA polymerase subunit family. Component of the RNA polymerase III complex consisting of 17 subunits: a ten-subunit horseshoe-shaped catalytic core composed of POLR3A/RPC1, POLR3B/RPC2, POLR1C/RPAC1, POLR1D/RPAC2, POLR3K/RPC10, POLR2E/RPABC1, POLR2F/RPABC2, POLR2H/RPABC3, POLR2K/RPABC4 and POLR2L/RPABC5; a mobile stalk composed of two subunits POLR3H/RPC8 and CRCP/RPC9, protruding from the core and functioning primarily in transcription initiation; and additional subunits homologous to general transcription factors of the RNA polymerase II machinery, POLR3C/RPC3-POLR3F/RPC6-POLR3G/RPC7 heterotrimer required for transcription initiation and POLR3D/RPC4-POLR3E/RPC5 heterodimer involved in both transcription initiation and termination. Directly interacts with POLR3G/RPC7 and POLR3GL. Directly interacts with POLR3F/RPC6. Interacts with GTF3C4. As part of the RNA polymerase III complex, interacts with PKP2.

The protein localises to the nucleus. Functionally, DNA-dependent RNA polymerase catalyzes the transcription of DNA into RNA using the four ribonucleoside triphosphates as substrates. Specific peripheric component of RNA polymerase III (Pol III) which synthesizes small non-coding RNAs including 5S rRNA, snRNAs, tRNAs and miRNAs from at least 500 distinct genomic loci. Part of POLR3C/RPC3-POLR3F/RPC6-POLR3G/RPC7 heterotrimer, coordinates the dynamics of Pol III stalk and clamp modules during the transition from apo to elongation state. Pol III plays a key role in sensing and limiting infection by intracellular bacteria and DNA viruses. Acts as a nuclear and cytosolic DNA sensor involved in innate immune response. Can sense non-self dsDNA that serves as template for transcription into dsRNA. The non-self RNA polymerase III transcripts, such as Epstein-Barr virus-encoded RNAs (EBERs) induce type I interferon and NF-kappa-B through the RIG-I pathway. Preferentially binds single-stranded DNA (ssDNA) in a sequence-independent manner. This chain is DNA-directed RNA polymerase III subunit RPC3, found in Rattus norvegicus (Rat).